The sequence spans 282 residues: D-arabinitol 2-dehydrogenase [ribulose-forming] (282 aa).

2 residues coordinate NADP(+): Leu32 and Asn53. Ser170 serves as the catalytic Proton donor. Residues Tyr185, Lys189, Ile218, and Thr220 each contribute to the NADP(+) site. The active-site Proton acceptor is the Tyr185. Lys189 functions as the Lowers pKa of active site Tyr in the catalytic mechanism.

Belongs to the short-chain dehydrogenases/reductases (SDR) family.

It catalyses the reaction D-arabinitol + NAD(+) = D-ribulose + NADH + H(+). Its pathway is carbohydrate metabolism; D-arabinitol metabolism. Catalyzes the NAD(+)-dependent oxidation of D-arabinitol at carbon 4 to produce D-ribulose. The sequence is that of D-arabinitol 2-dehydrogenase [ribulose-forming] (ARD) from Candida tropicalis (Yeast).